The sequence spans 93 residues: uncharacterized protein (93 aa).

The protein belongs to the SIMIBI class G3E GTPase family. ArgK/MeaB subfamily.

This is an uncharacterized protein from Streptomyces virginiae (Streptomyces cinnamonensis).